The sequence spans 1015 residues: DExH-box ATP-dependent RNA helicase DExH8 (1015 aa).

Residues 36–197 form the Helicase ATP-binding domain; sequence IDKILENRVT…FKELGRGERV (162 aa). Residue 49 to 56 coordinates ATP; it reads GEPGCGKS. The short motif at 144-147 is the DEVH box element; that stretch reads DEVH. In terms of domain architecture, Helicase C-terminal spans 254 to 419; sequence LIHDLILYIH…KLSLRQQVLH (166 aa). C3H1-type zinc fingers lie at residues 727–753 and 754–782; these read YGEA…THTL and QSTR…HAMR.

It belongs to the DExH box helicase family.

The enzyme catalyses ATP + H2O = ADP + phosphate + H(+). The polypeptide is DExH-box ATP-dependent RNA helicase DExH8 (Arabidopsis thaliana (Mouse-ear cress)).